The chain runs to 101 residues: Phosphoprotein OPG062 (101 aa).

The interval Pro51–Gly73 is disordered. Phosphoserine is present on residues Ser53 and Ser62. A compositionally biased stretch (basic and acidic residues) spans Cys56–Arg68.

This sequence belongs to the orthopoxvirus OPG062 family. Self-associates to form high molecular-weight forms. Interacts with protein OPG157. Interacts with host RICTOR and RPTOR; these interactions disrupt the mTORC1 and mTORC2 crosstalk. Phosphorylated on two serines. While these phosphorylations do not play a role in virion assembly; they are essential for the interaction with host RICTOR and RPTOR.

It is found in the virion. Its function is as follows. Plays an essential role in virion assembly and morphogenesis. Also plays a role in the inhibition of host immune response by dysregulating mTOR. Sequesters host RICTOR and RPTOR, thereby disrupting mTORC1 and mTORC2 crosstalk. In turn, blocks the host antiviral response in part through mTOR-dependent degradation of cGAS, the primary poxvirus sensor. In Homo sapiens (Human), this protein is Phosphoprotein OPG062 (OPG062).